We begin with the raw amino-acid sequence, 326 residues long: UDP-N-acetylglucosamine transporter (326 aa).

8 consecutive transmembrane segments (helical) span residues 4–24 (NLKYLSLGILVFQTTSLVLTM), 38–58 (LSSTAVVVAELLKIMACILLV), 136–156 (LGVYQWLSLVILMTGVAFVQW), 174–194 (FVGLMAVLTACFSSGFAGVYF), 212–232 (LGFFGSIFGLMGVYVYDGELV), 244–264 (LTWIVVVLQALGGLVIAAVIK), 269–289 (ILKGFATSLSIILSTLISYFW), and 293–313 (FVPTSVFFLGAILVITATFLY).

It belongs to the nucleotide-sugar transporter family. SLC35A subfamily. In terms of assembly, interacts with SLC35A2; the interaction is reduced in the presence of SLC35A4. Found in a complex with SLC35A2 and SLC35A4. Interacts with MGAT4B. Post-translationally, O-Glcnacylation regulates the stability of SLC35A3 and the specific complex formation with MGAT4B.

The protein localises to the golgi apparatus membrane. The catalysed reaction is UMP(out) + UDP-N-acetyl-alpha-D-glucosamine(in) = UMP(in) + UDP-N-acetyl-alpha-D-glucosamine(out). Its function is as follows. Transports diphosphate-N-acetylglucosamine (UDP-GlcNAc) from the cytosol into the lumen of the Golgi apparatus, functioning as an antiporter that exchanges UDP-N-acetyl-alpha-D-glucosamine for UMP. May supply UDP-GlcNAc as substrate for Golgi-resident glycosyltransferases that generate highly branched, multiantennary complex N-glycans and keratan sulfate. However, the exact role of SLC35A3 still needs to be elucidated, it could be a member of a catalytically more efficient multiprotein complex rather than function independently as a single transporter. This Bos taurus (Bovine) protein is UDP-N-acetylglucosamine transporter (SLC35A3).